The primary structure comprises 575 residues: Intermediate filament protein ifd-1 (575 aa).

A head region spans residues 1-56; that stretch reads MSKLNPRVAHNPVLSRIIESGRTNLPSGITSAGSLSAYAQAAAVTIRDNRDREKRE. In terms of domain architecture, IF rod spans 53–406; sequence EKREIADLNN…KLMEQAENLR (354 aa). The interval 57 to 88 is coil 1A; it reads IADLNNRLARYVEKVRFLEAQNRVLENDIGLF. The tract at residues 89–102 is linker 1; the sequence is RQAAHIHTGKVRDY. The tract at residues 103 to 240 is coil 1B; it reads YDAEKTSLAT…STHEIAIREE (138 aa). The interval 241–258 is linker 12; that stretch reads INKARRDSTDKNREFFHR. The coil 2 stretch occupies residues 259-408; the sequence is ELHMSMKEIR…MEQAENLRTS (150 aa). Positions 409–572 are tail; sequence YQSDFVIDTP…DEVGWYAHVS (164 aa). Positions 459–575 constitute an LTD domain; it reads NTQQFRSYGK…GWYAHVSYSH (117 aa).

Belongs to the intermediate filament family.

The protein localises to the cytoplasm. Its function is as follows. Cytoplasmic intermediate filaments provide mechanical strength to cells. Not essential protein. The protein is Intermediate filament protein ifd-1 of Caenorhabditis elegans.